Consider the following 284-residue polypeptide: 1D-myo-inositol 2-acetamido-2-deoxy-alpha-D-glucopyranoside deacetylase (284 aa).

The Zn(2+) site is built by His-12, Asp-15, and His-146.

This sequence belongs to the MshB deacetylase family. It depends on Zn(2+) as a cofactor.

The catalysed reaction is 1D-myo-inositol 2-acetamido-2-deoxy-alpha-D-glucopyranoside + H2O = 1D-myo-inositol 2-amino-2-deoxy-alpha-D-glucopyranoside + acetate. Its function is as follows. Catalyzes the deacetylation of 1D-myo-inositol 2-acetamido-2-deoxy-alpha-D-glucopyranoside (GlcNAc-Ins) in the mycothiol biosynthesis pathway. This chain is 1D-myo-inositol 2-acetamido-2-deoxy-alpha-D-glucopyranoside deacetylase, found in Mycolicibacterium gilvum (strain PYR-GCK) (Mycobacterium gilvum (strain PYR-GCK)).